A 222-amino-acid polypeptide reads, in one-letter code: Thymidylate kinase (222 aa).

Residues 29–34 and Arg-111 each bind ATP; that span reads RVGKST. Positions 146–170 are LID; the sequence is LSMSSEDATKRGEYGGERYEKLEFQ.

The protein belongs to the thymidylate kinase family. Homodimer. Mg(2+) is required as a cofactor.

The enzyme catalyses dTMP + ATP = dTDP + ADP. It participates in pyrimidine metabolism; dTTP biosynthesis. Its function is as follows. Catalyzes the phosphorylation of thymidine monophosphate (dTMP) to thymidine diphosphate (dTDP), the immediate precursor for the DNA building block dTTP, with ATP as the preferred phosphoryl donor in the presence of Mg(2+). This is Thymidylate kinase (dtymk) from Dictyostelium discoideum (Social amoeba).